The chain runs to 224 residues: Ribulose-phosphate 3-epimerase (224 aa).

Ser-8 lines the substrate pocket. Positions 31, 33, and 64 each coordinate a divalent metal cation. Residue Asp-33 is the Proton acceptor of the active site. Substrate-binding positions include His-64, 140-143, 173-175, and 195-196; these read GFGG, DGG, and GS. An a divalent metal cation-binding site is contributed by Asp-173. Asp-173 acts as the Proton donor in catalysis.

This sequence belongs to the ribulose-phosphate 3-epimerase family. A divalent metal cation is required as a cofactor.

The enzyme catalyses D-ribulose 5-phosphate = D-xylulose 5-phosphate. Its pathway is carbohydrate degradation. In terms of biological role, catalyzes the reversible epimerization of D-ribulose 5-phosphate to D-xylulose 5-phosphate. This chain is Ribulose-phosphate 3-epimerase, found in Mycobacterium leprae (strain TN).